The sequence spans 156 residues: Small ribosomal subunit protein uS7 (156 aa).

The protein belongs to the universal ribosomal protein uS7 family. In terms of assembly, part of the 30S ribosomal subunit. Contacts proteins S9 and S11.

One of the primary rRNA binding proteins, it binds directly to 16S rRNA where it nucleates assembly of the head domain of the 30S subunit. Is located at the subunit interface close to the decoding center, probably blocks exit of the E-site tRNA. The protein is Small ribosomal subunit protein uS7 of Desulfitobacterium hafniense (strain Y51).